Reading from the N-terminus, the 138-residue chain is Cyclin-dependent kinase 4 inhibitor B (138 aa).

One copy of the ANK 1; truncated repeat lies at 13-39; the sequence is GSDEGLASAAARGLVEKVRQLLEAGAD. ANK repeat units lie at residues 46 to 74, 79 to 108, and 112 to 138; these read FGRR…EPNC, TLTR…RLDV, and WGRL…ATGD.

Belongs to the CDKN2 cyclin-dependent kinase inhibitor family. In terms of assembly, heterodimer of CDKN2B with CDK4 or CDK6. Isoform 2 does not interact with CDK4 nor CDK6. Isoform 2 is expressed in normal (keratinocytes, fibroblasts) and tumor cell lines.

Its subcellular location is the cytoplasm. In terms of biological role, interacts strongly with CDK4 and CDK6. Potent inhibitor. Potential effector of TGF-beta induced cell cycle arrest. The sequence is that of Cyclin-dependent kinase 4 inhibitor B (CDKN2B) from Homo sapiens (Human).